A 122-amino-acid chain; its full sequence is Large ribosomal subunit protein uL14c (122 aa).

Belongs to the universal ribosomal protein uL14 family. As to quaternary structure, part of the 50S ribosomal subunit.

It localises to the plastid. Binds to 23S rRNA. This chain is Large ribosomal subunit protein uL14c, found in Cuscuta obtusiflora (Peruvian dodder).